The chain runs to 1498 residues: MIFSQGVSPFKGDFSKIKFSIASPESILAHSRGEVLKPETINYRTFKPERDGLMCEKIFGPTKDWECYCGKYKRVRYKGIICDRCGVEVTMKSVRRERMGHISLAVPVVHTWFFRSVPSKIGALLDLSTKELERVIYYEVYVVINPGEPGEKQGIKKLDRLTEEQYFQIITEYEDNQDLDDNDPAKFVAKMGGEAIHTLLKGLELDTQAVDLRKILRESGSEQKRADALKRLKVVEAFRKSFEPVKKTRKKSTGLFPEDEAPEPYVYEGNKPEYMVMEVIPVIPPELRPLVPLEGGRFATSDLNDLYRRVIIRNNRLKKLIDIRAPEVILRNEKRMLQEAVDALFDNSRKANAVKTGESNRPLKSLSDALKGKQGRFRQNLLGKRVDYSGRSVIVVGPELKLHECGLPKSMAIELFQPFVIRRLVERGIAKSVKSAKKLIDKKDPIVWDVLEKVIDGRPVLLNRAPTLHRLGIQAFQPVLIEGKAIQIHPLVCTAFNADFDGDQMAVHVPLSQEAQLEATLLMLSSHNLILPQSGKPVTVPSQDMVLGMYYLTKSRLGEKGQGKLFYGTEEVMIAFNEERIGLHALVFVHYDGRIEQKFDPLRMLDIIPDDQPEQKEWLKTKIGENKILVTTVGRVLFNRYVPEKIGFINKVIDKKGAKDLISKLSSEVGNVATAEFLDNIKQVGFHFAMKGGLSIGLADAIIPEVKVQHIKKATKESTKIVREYNRGTLTENERYNQIVDVWQKVTNLVAEESYQKLRKDRSGFNPLFMMLDSGARGSREQVRQLTGMRGLIARPQKSMSGQPGEIIENPIISNLKEGLTVLEYFVSTHGARKGLSDTSLKTADAGYLTRRLHDVAQDVIVTEDDCGTTRGIHVERGIEEETGGQIKFSEKIRGRVASRDIVDNLNDVVILPAGGIITDEIADAIQKNAGVVEADIRSVLTCEAKQGICSKCYGTNLSVHKLVEIGEAVGVIAAQSIGEPGTQLTLRTFHQGGTAQGGIAETETKSSMDGQVEFESIRSVEQETINEDGMPETVTLVIQKNGKINILDPDSGKFLKRYEVPHGAHLVCKNGDIVKKDDVLFSSEPNSTQIIAEVEGEVKFVDIDKGVTYKEEVDPQTGYVQHVIINWRTKLRASETREPRILIVDKEGETLKTYPVPIKSNLFIENGKKVKIGDMLAKVPRNLDRVGGDITAGLPKVTELFEARIPSDPAIVSEIDGYVGFGPQRRSSKEIKVKNEFGEEKNYYVQVGKHVLANEGDEVTAGEPLTDGAVSPQDILRIQGPNAVQQYLVNEIQKVYQINAGVEINDKHLEVIVRQMLQKVRVEEPGDTELLPGDLIDRTMFIRANSDVSEKVRVTSKGDAPARIHEGQLYKTREIIKLNRELRRNSKQLIDVEPALQATSHPVLLGITSAALQTESVISAASFQETTKVLTDAAVAGKIDNLAGLKENVIVGKLIPAGTGLKKYLKLSLDMLAEGKESADALAEEEAGAAESGEDDA.

Residues Cys-67, Cys-69, Cys-82, and Cys-85 each coordinate Zn(2+). The Mg(2+) site is built by Asp-499, Asp-501, and Asp-503. Zn(2+)-binding residues include Cys-867, Cys-943, Cys-950, and Cys-953.

It belongs to the RNA polymerase beta' chain family. As to quaternary structure, the RNAP catalytic core consists of 2 alpha, 1 beta, 1 beta' and 1 omega subunit. When a sigma factor is associated with the core the holoenzyme is formed, which can initiate transcription. The cofactor is Mg(2+). Zn(2+) is required as a cofactor.

It carries out the reaction RNA(n) + a ribonucleoside 5'-triphosphate = RNA(n+1) + diphosphate. Functionally, DNA-dependent RNA polymerase catalyzes the transcription of DNA into RNA using the four ribonucleoside triphosphates as substrates. This chain is DNA-directed RNA polymerase subunit beta', found in Chlorobium phaeobacteroides (strain BS1).